Here is a 105-residue protein sequence, read N- to C-terminus: uncharacterized protein (105 aa).

Residues 1–24 (MYWPCLVITPFTVGESFCLLLSLG) form the signal peptide.

This is an uncharacterized protein from Saccharomyces cerevisiae (strain ATCC 204508 / S288c) (Baker's yeast).